The sequence spans 34 residues: Antimicrobial peptide Alo-2 (34 aa).

3 cysteine pairs are disulfide-bonded: C1/C18, C8/C22, and C17/C33.

It localises to the secreted. Functionally, has antifungal activity against C.glabrata. In Acrocinus longimanus (Giant harlequin beetle), this protein is Antimicrobial peptide Alo-2.